The primary structure comprises 397 residues: MIIKPRVRGFICVTTHPAGCAASVREQIAYVARRGPIERGPKKVLVIGASTGYGLAARIAAAFGAGAATLGVFFERAPADAKPGTAGWYNSAAFHDEAAARGLQATSVNGDAFSDEIKHKTIDAIRRDLGQVDLVVYSAAAPRRTHPKTGVTHQSTLKPIGHAVRLRGIDTDNEAIKETLLQPATPDEIADTVAVMGGEDWRMWIDALDAAGVLADGAKTTAFTYLGEQVTHDIYWNGSIGEAKKDLDRTVLALRGKLAARGGDARVSVLKAVVTQASSAIPMMPLYLSLLFKVMKARGTHEGCIEQVDGLLRDSLYGAQPHVDAEGRLRADRLELDPAVQARVLELWDQVTDDNLYTLTDFAGYKAEFLRLFGFGIDGVDYDAPVEPNVRIPNLIE.

Residues 48–53 (GASTGY), 74–75 (FE), 111–112 (DA), and 139–140 (AA) contribute to the NAD(+) site. Residue Tyr225 coordinates substrate. Residue Tyr235 is the Proton donor of the active site. NAD(+) contacts are provided by residues Lys244 and 273–275 (VVT).

Belongs to the TER reductase family. Monomer.

It carries out the reaction a 2,3-saturated acyl-[ACP] + NAD(+) = a (2E)-enoyl-[ACP] + NADH + H(+). Its pathway is lipid metabolism; fatty acid biosynthesis. Its function is as follows. Involved in the final reduction of the elongation cycle of fatty acid synthesis (FAS II). Catalyzes the reduction of a carbon-carbon double bond in an enoyl moiety that is covalently linked to an acyl carrier protein (ACP). This Burkholderia pseudomallei (strain 1710b) protein is Enoyl-[acyl-carrier-protein] reductase [NADH].